Consider the following 276-residue polypeptide: D-aminoacyl-tRNA deacylase (276 aa).

The protein belongs to the DtdA deacylase family. In terms of assembly, monomer. It depends on Zn(2+) as a cofactor.

The catalysed reaction is a D-aminoacyl-tRNA + H2O = a tRNA + a D-alpha-amino acid + H(+). The enzyme catalyses glycyl-tRNA(Ala) + H2O = tRNA(Ala) + glycine + H(+). In terms of biological role, D-aminoacyl-tRNA deacylase with broad substrate specificity. By recycling D-aminoacyl-tRNA to D-amino acids and free tRNA molecules, this enzyme counteracts the toxicity associated with the formation of D-aminoacyl-tRNA entities in vivo. In Staphylothermus marinus (strain ATCC 43588 / DSM 3639 / JCM 9404 / F1), this protein is D-aminoacyl-tRNA deacylase.